The following is a 477-amino-acid chain: (R)-2-hydroxyglutaryl-CoA dehydratase, subunit alpha (477 aa).

The protein belongs to the FldB/FldC dehydratase alpha/beta subunit family. As to quaternary structure, the (R)-2-hydroxyglutaryl-CoA dehydratase enzyme system is a heterodimer composed of an alpha subunit (HgdA) and a beta subunit (HgdB). It depends on [4Fe-4S] cluster as a cofactor. FMN is required as a cofactor. Mg(2+) serves as cofactor.

It is found in the cytoplasm. The catalysed reaction is (R)-2-hydroxyglutaryl-CoA = (2E)-glutaconyl-CoA + H2O. The protein operates within amino-acid degradation; L-glutamate degradation via hydroxyglutarate pathway; crotonoyl-CoA from L-glutamate: step 4/5. With respect to regulation, activated by the HgdC. Reversibly inactivated by oxidants such as 2-nitrophenol, 3-nitrophenol, 4-nitrophenol, 4-nitrobenzoate, carbonyl cyanide 4-(trifluoromethoxy)phenylhydrazone (FCCP) and chloramphenicol. Irreversibly inactivated by oxidants such as hydroxylamine and nitrite. In terms of biological role, involved in the fermentation of L-glutamate via the hydroxyglutarate pathway. Catalyzes the reversible syn-elimination of water from (R)-2-hydroxyglutaryl-CoA to yield (E)-glutaconyl-CoA. The dehydration mechanism involves a transient one electron reduction of the thioester from (R)-2-hydroxyglutaryl-CoA, generating a ketyl radical. Prior to (E)-glutaconyl-CoA formation, the ketyl radical is subsequently reoxidized by electron transfer back to the HgdA-HgdB complex (CompD) to avoid change in oxidation state of the substrate. The appropriate redox state of dehydratase HgdA-HgdB complex (CompD) is maintained by HgdC (CompA) via hydrolysis of ATP and ATP-dependent electron transfer. Since the electron is recycled, the dehydratase is able to perform several turnovers with only catalytic amounts of ATP and substoichiometric amounts of HgdC (CompA). The polypeptide is (R)-2-hydroxyglutaryl-CoA dehydratase, subunit alpha (Acidaminococcus fermentans (strain ATCC 25085 / DSM 20731 / CCUG 9996 / CIP 106432 / VR4)).